The following is a 346-amino-acid chain: Uroporphyrinogen decarboxylase (346 aa).

Substrate-binding positions include 21 to 25 (RQAGR), aspartate 71, tyrosine 146, serine 201, and histidine 316.

Belongs to the uroporphyrinogen decarboxylase family. Homodimer.

The protein localises to the cytoplasm. The enzyme catalyses uroporphyrinogen III + 4 H(+) = coproporphyrinogen III + 4 CO2. The protein operates within porphyrin-containing compound metabolism; protoporphyrin-IX biosynthesis; coproporphyrinogen-III from 5-aminolevulinate: step 4/4. Functionally, catalyzes the decarboxylation of four acetate groups of uroporphyrinogen-III to yield coproporphyrinogen-III. This Rickettsia africae (strain ESF-5) protein is Uroporphyrinogen decarboxylase.